The following is a 426-amino-acid chain: Glutamate-1-semialdehyde 2,1-aminomutase (426 aa).

Lysine 265 is modified (N6-(pyridoxal phosphate)lysine).

This sequence belongs to the class-III pyridoxal-phosphate-dependent aminotransferase family. HemL subfamily. Homodimer. Requires pyridoxal 5'-phosphate as cofactor.

The protein localises to the cytoplasm. The catalysed reaction is (S)-4-amino-5-oxopentanoate = 5-aminolevulinate. The protein operates within porphyrin-containing compound metabolism; protoporphyrin-IX biosynthesis; 5-aminolevulinate from L-glutamyl-tRNA(Glu): step 2/2. This is Glutamate-1-semialdehyde 2,1-aminomutase from Actinobacillus pleuropneumoniae serotype 3 (strain JL03).